The following is a 101-amino-acid chain: Large ribosomal subunit protein uL24 (101 aa).

It belongs to the universal ribosomal protein uL24 family. Part of the 50S ribosomal subunit.

Its function is as follows. One of two assembly initiator proteins, it binds directly to the 5'-end of the 23S rRNA, where it nucleates assembly of the 50S subunit. One of the proteins that surrounds the polypeptide exit tunnel on the outside of the subunit. The sequence is that of Large ribosomal subunit protein uL24 from Borreliella burgdorferi (strain ATCC 35210 / DSM 4680 / CIP 102532 / B31) (Borrelia burgdorferi).